Consider the following 390-residue polypeptide: Immunoglobulin mu Fc receptor (390 aa).

Residues 1-16 form the signal peptide; the sequence is MDFWLWPLYFLPVSGA. At 17 to 251 the chain is on the extracellular side; that stretch reads LRILPEVKVE…GSQSGREGQG (235 aa). In terms of domain architecture, Ig-like spans 23-123; the sequence is VKVEGELGGS…KTQKVTLNVH (101 aa). The tract at residues 33–115 is CDR4; the sequence is VTIKCPLPEM…AGMNTDRGKT (83 aa). Intrachain disulfides connect Cys-37–Cys-104 and Cys-49–Cys-58. Residues 40 to 45 are CDR1; it reads PEMHVR. Residues 59 to 70 are CDR2; it reads GTVVSTTNFIKA. The residue at position 92 (Thr-92) is a Phosphothreonine. The tract at residues 106-115 is CDR3; it reads AGMNTDRGKT. Residues 166 to 204 form a disordered region; that stretch reads PAQRGKVPPVHHSSPTTQITHRPRVSRASSVAGDKPRTF. Residues 252-272 traverse the membrane as a helical segment; it reads FHILIPTILGLFLLALLGLVV. Topologically, residues 273-390 are cytoplasmic; the sequence is KRAVERRKAL…DSDDYINVPA (118 aa). Composition is skewed to low complexity over residues 293-311 and 325-334; these read MRAL…PRSQ and ADAAGTGEAP. The interval 293 to 348 is disordered; sequence MRALESSQRPRGSPRPRSQNNIYSACPRRARGADAAGTGEAPVPGPGAPLPPAPLQ. Positions 335-346 are enriched in pro residues; it reads VPGPGAPLPPAP.

In terms of assembly, interacts (via Ig-like domain) with IGHM (via CH4/Cmu4 domain), both secreted and membrane-bound IgM; the interaction is glycan-independent and multivalent theoretically involving up to eight binding sites for the IgM pentamer. Phosphorylated on both Tyr and Ser residues. Post-translationally, O-glycosylated. Sialylated. O-linked glycans regulate trafficking to the plasma membrane. Expressed by CD19-positive B cells and CD4-positive and CD8-positive T cell populations in primary and secondary lymphoid tissues (at protein level). Among B cell subsets, detected in a subset of bone marrow pro- and pre-B cells, in most follicular and memory B cells and in a small subset of germinal center B cells (at protein level). Expressed at lower levels in CD56-positive NK cells (at protein level). Expressed in lymph nodes, lung, thymus and kidneys. Very weak expression detected in spleen, liver, heart, and salivary gland.

It is found in the cell membrane. It localises to the early endosome membrane. The protein localises to the golgi apparatus. The protein resides in the trans-Golgi network membrane. Its subcellular location is the lysosome membrane. It is found in the secreted. Functionally, high-affinity Fc receptor for immunoglobulin M (IgM), both secreted and membrane-bound IgM. Primarily regulates IgM transport and homeostasis. In lymphoid cells, enables exocytosis of membrane-bound IgM on the plasma membrane as well as endocytosis of IgM-antigen complexes toward lysosomes for degradation. In mucosal epithelium, mediates retrotranscytosis of antigen-IgM complexes across mucosal M cells toward antigen-presenting cells in mucosal lymphoid tissues. Triggers costimulatory signaling and mediates most of IgM effector functions involved in B cell development and primary immune response to infection. Likely limits tonic IgM BCR signaling to self-antigens for proper negative selection of autoreactive B cells in the bone marrow and for the maintenance of regulatory B cell pool in peripheral lymphoid organs. Mediates antibody responses to T cell-dependent and T cell-independent antigens and promotes induction of an efficient neutralizing IgG response. Engages in cross-talk with antigen-receptor signaling via the non-canonical NF-kappa-B, MAP kinases and calcium signaling pathways. This Homo sapiens (Human) protein is Immunoglobulin mu Fc receptor.